Here is a 289-residue protein sequence, read N- to C-terminus: Diaminopimelate epimerase (289 aa).

Substrate-binding residues include N11 and N78. C87 serves as the catalytic Proton donor. Residues 88–89 (GN), N163, N199, and 217–218 (ER) each bind substrate. C226 acts as the Proton acceptor in catalysis. Substrate is bound at residue 227 to 228 (GT).

This sequence belongs to the diaminopimelate epimerase family. In terms of assembly, homodimer.

It localises to the cytoplasm. It catalyses the reaction (2S,6S)-2,6-diaminopimelate = meso-2,6-diaminopimelate. The protein operates within amino-acid biosynthesis; L-lysine biosynthesis via DAP pathway; DL-2,6-diaminopimelate from LL-2,6-diaminopimelate: step 1/1. Its function is as follows. Catalyzes the stereoinversion of LL-2,6-diaminopimelate (L,L-DAP) to meso-diaminopimelate (meso-DAP), a precursor of L-lysine and an essential component of the bacterial peptidoglycan. This is Diaminopimelate epimerase from Mycobacterium bovis (strain ATCC BAA-935 / AF2122/97).